Here is a 244-residue protein sequence, read N- to C-terminus: MAKRSIWAGDEDNKPKKRETYADDTVGRFHSGYSETNERGKVVPVALDKWRISTGEQSVADAVAQLFGGTPVENEESTSENFIDVFTDRPKVPVIIEADGIHWDMKLWLNGKLKHHCDGFDFVSHADEEMIGQPCGCPKLFDERKAAAKEYDAPNPAITVTFTLADDPELGRFKFQTGSWTLFKVLHEAEDDVERVGKGGAVLANLELELVEYTPKRGPMRNKLVSYYKPTITVLKSYNDAIAD.

The interval 1 to 34 (MAKRSIWAGDEDNKPKKRETYADDTVGRFHSGYS) is disordered. The segment covering 11–27 (EDNKPKKRETYADDTVG) has biased composition (basic and acidic residues).

In terms of assembly, interacts with the integrase.

Functionally, recombination directionality factor that interacts directly with the integrase tetramer to activate excision and inhibit integration. In Streptomyces coelicolor (Bacteriophage phi-C31), this protein is Recombination directionality factor.